A 444-amino-acid polypeptide reads, in one-letter code: Vacuolar protein sorting-associated protein 4B (444 aa).

The 79-residue stretch at 4–82 (TSPNLQKAID…KEYLKNKEKK (79 aa)) folds into the MIT domain. The stretch at 19–82 (AQEDKAGNYE…KEYLKNKEKK (64 aa)) forms a coiled coil. Residues 78–88 (NKEKKAQKPVK) show a composition bias toward basic and acidic residues. Residues 78 to 117 (NKEKKAQKPVKEGQPSPADEKGNDSDGEGESDDPEKKKLQ) are disordered. A phosphoserine mark is found at serine 93, serine 102, and serine 108. ATP is bound at residue 174 to 181 (GPPGTGKS). A Phosphoserine modification is found at serine 410.

The protein belongs to the AAA ATPase family. As to quaternary structure, proposed to be monomeric or homodimeric in nucleotide-free form and to oligomerize upon binding to ATP to form two stacked hexameric or heptameric rings with a central pore through which ESCRT-III substrates are translocated in an ATP-dependent manner. In vitro, associates on the inside of a helical tubular structure formed by a CHMP2A-CHMP3 polymer. Interacts with CHMP1A, CHMP1B, CHMP2A, CHMP4B and CHMP6. Interacts with VPS4A; the interaction suggests a heteromeric assembly with VPS4A. Interacts with VTA1.

The protein localises to the late endosome membrane. The enzyme catalyses ATP + H2O = ADP + phosphate + H(+). Its function is as follows. Involved in late steps of the endosomal multivesicular bodies (MVB) pathway. Recognizes membrane-associated ESCRT-III assemblies and catalyzes their disassembly, possibly in combination with membrane fission. Redistributes the ESCRT-III components to the cytoplasm for further rounds of MVB sorting. MVBs contain intraluminal vesicles (ILVs) that are generated by invagination and scission from the limiting membrane of the endosome and mostly are delivered to lysosomes enabling degradation of membrane proteins, such as stimulated growth factor receptors, lysosomal enzymes and lipids. VPS4A/B are required for the exosomal release of SDCBP, CD63 and syndecan. Functionally, (Microbial infection) In conjunction with the ESCRT machinery also appears to function in topologically equivalent membrane fission events, such as the terminal stages of cytokinesis and enveloped virus budding (lentiviruses). The chain is Vacuolar protein sorting-associated protein 4B (VPS4B) from Pongo abelii (Sumatran orangutan).